Reading from the N-terminus, the 598-residue chain is Probable transporter mch1 (598 aa).

The segment at 1-49 (MASPTPAPRPDQISASTPLLQSDSTSSCASSIRSLSPSRRRHRNGRTSP) is disordered. Positions 22–37 (SDSTSSCASSIRSLSP) are enriched in low complexity. Residue Asn-57 is glycosylated (N-linked (GlcNAc...) asparagine). 6 helical membrane passes run 63 to 83 (ALLSSLCAGSITIFSMYGHIF), 96 to 116 (GLSSAASFATYMPVPLLGYMC), 122 to 142 (GPLSFVSALFFAAGYGLAAGV), 164 to 184 (LAYAAMITAFVFIGVGTCSMY), 202 to 222 (GLALAVPIAAFGLSGMWQSQL), and 241 to 261 (VFHFFIFLGVLLFVVGCLGTF). Positions 315 to 334 (AGILDPSKPDNDSDSEEEDD) are disordered. A glycan (N-linked (GlcNAc...) asparagine) is linked at Asn-325. 6 helical membrane-spanning segments follow: residues 355-375 (HTMWCFALGFFLMIGPGEAFI), 405-425 (IVGITSTLVRLLTGSLTDLLA), 453-473 (FLLFFAVTLSVGLATLASGWI), 486-506 (LVGAGYGAVFSLTPIIITVIW), 516-536 (GIVAMFPALGATFWGLVYSAV), and 565-585 (SAFWAMAASVWVACGLVLWAW).

The protein belongs to the major facilitator superfamily.

The protein resides in the vacuole membrane. Functionally, probable transporter. The chain is Probable transporter mch1 (mch1) from Neurospora crassa (strain ATCC 24698 / 74-OR23-1A / CBS 708.71 / DSM 1257 / FGSC 987).